The primary structure comprises 482 residues: E3 ubiquitin-protein ligase parkin (482 aa).

Positions 30-99 (LSIYVKTNTG…LGQQSVLHAI (70 aa)) constitute a Ubiquitin-like domain. S94 carries the post-translational modification Phosphoserine; by Pink1. The segment at 157–246 (AHFFVHCSQC…SGGEKDFAAP (90 aa)) adopts an RING-type 0; atypical zinc-finger fold. Positions 163, 166, 178, and 181 each coordinate Zn(2+). A Phosphothreonine; by Pink1 modification is found at T187. C208, C232, H235, C259, C262, C274, H278, C281, C284, C310, C314, C353, C358, C373, C377, C382, C385, H390, C394, C436, and C439 together coordinate Zn(2+). The interval 255–482 (KNVPCLACTD…RDCMGAHWFG (228 aa)) is TRIAD supradomain. An RING-type 1 zinc finger spans residues 259–314 (CLACTDVSDTVLVFPCASQHVTCIDCFRHYCRSRLGERQFMPHPDFGYTLPCPAGC). IBR-type zinc fingers lie at residues 334–394 (DRYQ…IGEC) and 432–473 (STKP…EWTR). The RING-type 2; atypical zinc finger occupies 436 to 467 (CPKCRTPTERDGGCMHMVCTRAGCGFEWCWVC). The active site involves C449. Positions 454, 459, 464, 467, 475, and 479 each coordinate Zn(2+).

Belongs to the RBR family. Parkin subfamily. As to quaternary structure, forms an E3 ubiquitin ligase complex with E2 ubiquitin-conjugating enzymes. Interacts with Pink1. Interacts with Marf. Interacts with Paris. Interacts with septins Septin1 and pnut. Post-translationally, auto-ubiquitinates in an E2-dependent manner leading to its own degradation. Phosphorylated. Activation requires phosphorylation at Ser-94 by Pink1 and binding to Pink1-phosphorylated polyubiquitin chains. Phosphorylation at Thr-187 by Pink1 is also important for mitochondrial localization. In oocytes, accumulates in early egg chambers where it is enriched until stages 9-10, localizing mainly to the posterior pole and anterior margin (at protein level). After stage 10 it is no longer detected in the oocyte (at protein level). In embryos, ubiquitously expressed in the early stages (stages 2 to 5) (at protein level). Expression levels decrease at later stages and becomes restricted to the brain and nerve cord from stage 9 (at protein level). Relatively higher levels of expression in the head compared to the body. Enriched in the dorsomedial (DM) dopaminergic neurons.

The protein localises to the mitochondrion. Its subcellular location is the cytoplasm. The protein resides in the cytosol. It catalyses the reaction [E2 ubiquitin-conjugating enzyme]-S-ubiquitinyl-L-cysteine + [acceptor protein]-L-lysine = [E2 ubiquitin-conjugating enzyme]-L-cysteine + [acceptor protein]-N(6)-ubiquitinyl-L-lysine.. It participates in protein modification; protein ubiquitination. In the autoinhibited state the side chain of Phe-481 inserts into a hydrophobic groove in RING-0, occluding the ubiquitin acceptor site Cys-449, whereas the REP repressor element binds RING-1 and blocks its E2-binding site. Activation of park requires 2 steps: (1) phosphorylation at Ser-94 by Pink1 and (2) binding to phosphorylated ubiquitin, leading to unlock repression of the catalytic Cys-449 by the RING-0 region via an allosteric mechanism and converting park to its fully-active form. According to another report, phosphorylation at Ser-94 by Pink1 is not essential for activation and only binding to phosphorylated ubiquitin is essential to unlock repression. In terms of biological role, E3 ubiquitin-protein ligase which accepts ubiquitin from E2 ubiquitin-conjugating enzymes in the form of a thioester and then directly transfers the ubiquitin to targeted substrates, such as Paris, Marf, Opa1, Miro, pnut, Septin1, Tom20 and porin. Mediates monoubiquitination as well as 'Lys-6', 'Lys-11', 'Lys-48'-linked and 'Lys-63'-linked polyubiquitination of substrates, depending on the context. Protects against mitochondrial dysfunction during cellular stress, by acting downstream of Pink1, to coordinate mitochondrial quality control mechanisms that remove and replace dysfunctional mitochondrial components. Depending on the severity of mitochondrial damage and/or dysfunction, activity ranges from preventing apoptosis and stimulating mitochondrial biogenesis to regulating mitochondrial dynamics and eliminating severely damaged mitochondria via mitophagy. Appears to be particularly important in maintaining the physiology and function of cells with high energy demands that are undergoing stress or altered metabolic environment, including spermatids, muscle cells and neurons such as the dopaminergic (DA) neurons. Activation and recruitment onto the outer membrane of damaged/dysfunctional mitochondria (OMM) requires Pink1-mediated phosphorylation of both park and ubiquitin. In depolarized mitochondria, mediates the decision between mitophagy or preventing apoptosis by inducing either the poly- or monoubiquitination of porin/VDAC; polyubiquitination of porin promotes mitophagy, while monoubiquitination of porin decreases mitochondrial calcium influx which ultimately inhibits apoptosis. When cellular stress results in irreversible mitochondrial damage, promotes the autophagic degradation of dysfunctional depolarized mitochondria (mitophagy) by promoting the ubiquitination of mitochondrial proteins. Preferentially assembles 'Lys-6'-, 'Lys-11'- and 'Lys-63'-linked polyubiquitin chains following mitochondrial damage, leading to mitophagy. In developing tissues, inhibits JNK-mediated apoptosis by negatively regulating bsk transcription. The Pink1-park pathway also promotes fission and/or inhibits fusion of damaged mitochondria by mediating the ubiquitination and subsequent degradation of proteins involved in mitochondrial fusion/fission such as Marf, Opa1 and fzo. This prevents the refusion of unhealthy mitochondria with the healthy mitochondrial network and/or initiates mitochondrial fragmentation facilitating their later engulfment by autophagosomes. Regulates motility of damaged mitochondria by phosphorylating Miro which likely promotes its park-dependent degradation by the proteasome; in motor neurons, this inhibits mitochondrial intracellular anterograde transport along the axons which probably increases the chance of the mitochondria being eliminated in the soma. The Pink1-park pathway is also involved in mitochondrial regeneration processes such as promoting mitochondrial biogenesis, activating localized mitochondrial repair, promoting selective turnover of mitochondrial proteins and initiating the mitochondrial import of endogenous proteins. Involved in mitochondrial biogenesis via the ubiquitination of transcriptional repressor Paris which leads to its subsequent proteasomal degradation and allows activation of the transcription factor srl. Promotes localized mitochondrial repair by activating the translation of specific nuclear-encoded mitochondrial RNAs (nc-mtRNAs) on the mitochondrial surface, including several key electron transport chain component nc-mtRNAs. This chain is E3 ubiquitin-protein ligase parkin, found in Drosophila melanogaster (Fruit fly).